A 254-amino-acid polypeptide reads, in one-letter code: 3-deoxy-manno-octulosonate cytidylyltransferase (254 aa).

The protein belongs to the KdsB family.

It is found in the cytoplasm. The enzyme catalyses 3-deoxy-alpha-D-manno-oct-2-ulosonate + CTP = CMP-3-deoxy-beta-D-manno-octulosonate + diphosphate. It participates in nucleotide-sugar biosynthesis; CMP-3-deoxy-D-manno-octulosonate biosynthesis; CMP-3-deoxy-D-manno-octulosonate from 3-deoxy-D-manno-octulosonate and CTP: step 1/1. It functions in the pathway bacterial outer membrane biogenesis; lipopolysaccharide biosynthesis. Functionally, activates KDO (a required 8-carbon sugar) for incorporation into bacterial lipopolysaccharide in Gram-negative bacteria. This is 3-deoxy-manno-octulosonate cytidylyltransferase from Polynucleobacter asymbioticus (strain DSM 18221 / CIP 109841 / QLW-P1DMWA-1) (Polynucleobacter necessarius subsp. asymbioticus).